Reading from the N-terminus, the 221-residue chain is Ribonuclease S-2 (221 aa).

The N-terminal stretch at 1-20 (MIYIFTMVFSLNVLILSSSA) is a signal peptide. Residue Q31 coordinates RNA. C37 and C44 are oxidised to a cystine. RNA is bound by residues H55, 91–92 (NV), F101, 104–105 (KQ), and 108–109 (KH). H55 serves as the catalytic Proton donor. Residues C70 and C112 are joined by a disulfide bond. An N-linked (GlcNAc...) asparagine glycan is attached at N91. The active site involves Q105. The active-site Proton acceptor is the H109. Residues N137, N153, and N195 are each glycosylated (N-linked (GlcNAc...) asparagine). Cystine bridges form between C176-C214 and C191-C202.

The protein belongs to the RNase T2 family. Post-translationally, N-linked core structure at Asn-91, Asn-137, and Asn-153 contains xylose and at Asn-195 contains xylose and fucose.

Its subcellular location is the secreted. The protein localises to the extracellular space. It carries out the reaction a ribonucleotidyl-ribonucleotide-RNA + H2O = a 3'-end 3'-phospho-ribonucleotide-RNA + a 5'-end dephospho-ribonucleoside-RNA + H(+). In terms of biological role, self-incompatibility (SI) is the inherited ability of a flowering plant to prevent self-fertilization by discriminating between self and non-self pollen during pollination. In many species, self-incompatibility is controlled by the single, multiallelic locus S. In Pyrus pyrifolia (Chinese pear), this protein is Ribonuclease S-2.